Here is a 106-residue protein sequence, read N- to C-terminus: Circadian clock oscillator protein KaiB (106 aa).

Belongs to the KaiB family. The KaiABC complex composition changes during the circadian cycle to control KaiC phosphorylation. Complexes KaiC(6), KaiA(2-4):KaiC(6), KaiB(6):KaiC(6) and KaiC(6):KaiB(6):KaiA(12) are among the most important forms, many form cooperatively. Undergoes a major conformational rearrangment; in the free state forms homotetramers as a dimer of dimers. When bound to the CI domain of KaiC switches to a monomeric thioredoxin-fold (KaiB(fs)). KaiB(fs) binds CikA, leading it to dephosphorylate phospho-RpaA.

In terms of biological role, key component of the KaiABC oscillator complex, which constitutes the main circadian regulator in cyanobacteria. Complex composition changes during the circadian cycle to control KaiC phosphorylation. KaiA stimulates KaiC autophosphorylation, while KaiB sequesters KaiA, leading to KaiC autodephosphorylation. Phospho-Ser-431 KaiC accumulation triggers binding of KaiB to form the KaiB(6):KaiC(6) complex, leading to changes in output regulators CikA and SasA. KaiB switches to a thioredoxin-like fold (KaiB(fs)) when bound to KaiC. KaiB(6):KaiC(6) formation exposes a site for KaiA binding that sequesters KaiA from KaiC, making the KaiC(6):KaiB(6):KaiA(12) complex that results in KaiC autodephosphorylation. A metamorphic protein which reversibly switches between an inactive tetrameric fold and a rare, thioredoxin-like monomeric fold (KaiB(fs)). KaiB(fs) binds phospho-KaiC, KaiA and CikA. KaiA and CikA compete for binding to KaiB(fs), and KaiB(fs) and SasA compete for binding to KaiC, thus the clock oscillator and output signal pathway are tightly coupled. This chain is Circadian clock oscillator protein KaiB, found in Gloeothece citriformis (strain PCC 7424) (Cyanothece sp. (strain PCC 7424)).